Reading from the N-terminus, the 273-residue chain is Thioredoxin-like 1-3, chloroplastic (273 aa).

Residues 1-44 constitute a chloroplast transit peptide; that stretch reads MATDSFIKLNPISFNRARFDLRDFAGISPKSISSLCCISPRLIS. One can recognise a Thioredoxin domain in the interval 62 to 202; the sequence is LFSKKKIPAF…FKEALEKHGR (141 aa). Catalysis depends on nucleophile residues C125 and C128. A disulfide bond links C125 and C128.

This sequence belongs to the thioredoxin family.

It localises to the plastid. The protein localises to the chloroplast. In terms of biological role, probable thiol-disulfide oxidoreductase that may participate in various redox reactions. The polypeptide is Thioredoxin-like 1-3, chloroplastic (Arabidopsis thaliana (Mouse-ear cress)).